The sequence spans 356 residues: A-type ATP synthase subunit C (356 aa).

The protein belongs to the V-ATPase V0D/AC39 subunit family. As to quaternary structure, has multiple subunits with at least A(3), B(3), C, D, E, F, H, I and proteolipid K(x).

The protein resides in the cell membrane. Its function is as follows. Component of the A-type ATP synthase that produces ATP from ADP in the presence of a proton gradient across the membrane. The polypeptide is A-type ATP synthase subunit C (Thermoplasma volcanium (strain ATCC 51530 / DSM 4299 / JCM 9571 / NBRC 15438 / GSS1)).